The primary structure comprises 558 residues: Atlastin-1 (558 aa).

Positions 1-27 (MAKNRRDRNSWGGFSEKTYEWSSEEEE) are disordered. Residues 1–34 (MAKNRRDRNSWGGFSEKTYEWSSEEEEPVKKAGP) are N-terminal hypervariable region (HVR). The Cytoplasmic portion of the chain corresponds to 1 to 449 (MAKNRRDRNS…NIFHAARTPA (449 aa)). Phosphoserine is present on residues serine 10, serine 22, and serine 23. The region spanning 64–309 (DKEVVAVSVA…LIPWLLSPES (246 aa)) is the GB1/RHD3-type G domain. The GDP site is built by arginine 77, lysine 78, glycine 79, lysine 80, serine 81, phenylalanine 82, glutamine 148, arginine 217, aspartate 218, valine 276, and asparagine 279. Positions 77, 78, 79, 80, 81, and 82 each coordinate GTP. Residue serine 81 participates in Mg(2+) binding. Residues arginine 217, aspartate 218, and valine 276 each coordinate GTP. The interval 347–438 (MLQATAEANN…YIQYIKHNDS (92 aa)) is 3HB (three-helix bundle) domain. The residue at position 395 (lysine 395) is an N6-acetyllysine. The stretch at 412 to 439 (EFSRRYLQQLESEIDELYIQYIKHNDSK) forms a coiled coil. The tract at residues 439–447 (KNIFHAART) is linker. Residues 450-470 (TLFVVIFITYVIAGVTGFIGL) form a helical membrane-spanning segment. Position 471 (aspartate 471) is a topological domain, lumenal. Residues 472 to 492 (IIASLCNMIMGLTLITLCTWA) form a helical membrane-spanning segment. Residues 493–558 (YIRYSGEYRE…STEQSEKKKM (66 aa)) are Cytoplasmic-facing. Residues 521–558 (NEALYKLYSAAATHRHLYHQAFPTPKSESTEQSEKKKM) are autoinhibitory domain.

It belongs to the TRAFAC class dynamin-like GTPase superfamily. GB1/RHD3 GTPase family. GB1 subfamily. In terms of assembly, monomeric and homodimeric. The homodimer, transiently formed by two molecules on opposing membranes, is the active form mediating ER membrane fusion. Interacts with REEP1, REEP5, RTN3 and RTN4 (via the transmembrane region); these proteins are involved in endoplasmic reticulum tubular network organization. Interacts with ZFYVE27; both proteins are involved in endoplasmic reticulum tubular network organization. Interacts with ARL6IP1; both proteins are involved in endoplasmic reticulum tubular network organization. Interacts with SPAST; the interaction is direct, could recruit SPAST to Golgi membranes. Interacts (via N-terminal region) with MAP4K4 (via CNH regulatory domain). May interact with TMED2. Interacts with CPT1C. In terms of processing, phosphorylated. Phosphorylation, by different kinases, of the N-terminal hypervariable region (HVR) regulates the ATL1-mediated membrane tethering step.

It localises to the endoplasmic reticulum membrane. The protein resides in the golgi apparatus membrane. Its subcellular location is the cell projection. The protein localises to the axon. It catalyses the reaction GTP + H2O = GDP + phosphate + H(+). In terms of biological role, atlastin-1 (ATL1) is a membrane-anchored GTPase that mediates the GTP-dependent fusion of endoplasmic reticulum (ER) membranes, maintaining the continuous ER network. It facilitates the formation of three-way junctions where ER tubules intersect. Two atlastin-1 on neighboring ER tubules bind GTP and form loose homodimers through the GB1/RHD3-type G domains and 3HB regions. Upon GTP hydrolysis, the 3HB regions tighten, pulling the membranes together to drive their fusion. After fusion, the homodimer disassembles upon release of inorganic phosphate (Pi). Subsequently, GDP dissociates, resetting the monomers to a conformation ready for a new fusion cycle. May also regulate more or less directly Golgi biogenesis. Indirectly regulates axonal development. This is Atlastin-1 from Pongo abelii (Sumatran orangutan).